We begin with the raw amino-acid sequence, 468 residues long: Protein translocase subunit SecY (468 aa).

Over 1–20 (MGARDVIYAMEKWFPEVERP) the chain is Cytoplasmic. The chain crosses the membrane as a helical span at residues 21–47 (KKHVPLKEKFVWTGLALVLYYVLAEIP). The Extracellular segment spans residues 48–58 (VYGIPKKIQDY). The helical intramembrane region spans 59-66 (FQFLRVVL). The discontinuously helical transmembrane segment at 59-87 (FQFLRVVLAGRNGSILTLGIGPIVTAGII) threads the bilayer. Residues 67–78 (AGRNGSILTLGI) lie within the membrane without spanning it. Positions 79 to 87 (GPIVTAGII) form an intramembrane region, helical. Topologically, residues 88–108 (LQLLVGSELIRLDLANPEDRR) are cytoplasmic. A helical membrane pass occupies residues 109–133 (FYQALQRVFSVFMCFFEAAIWVLGG). At 134 to 144 (AFGRVGVDVTY) the chain is on the extracellular side. Residues 145-169 (TIATLMIIQLALGGIILIVLDELVS) form a helical membrane-spanning segment. At 170-175 (KWGIGS) the chain is on the cytoplasmic side. A helical transmembrane segment spans residues 176–194 (GISLFIAAGVSQRILTRSL). Over 195 to 239 (NPLTDPNIIDPLTGKPAIVGAIPYFIQHILDGDLKGALYRGGSAP) the chain is Extracellular. Residues 240–261 (DMIAVTATIIVFLVVVYFESMR) form a helical membrane-spanning segment. At 262–285 (VEIPLGYRGVTIRGRYPIKFLYVS) the chain is on the cytoplasmic side. Residues 286-307 (NIPIILTFALYANIQLWARVLD) form a helical membrane-spanning segment. Topologically, residues 308–346 (RFGHPWLGRFDPVTGNPIGGFVLYVIPPRNIFTVIDNPV) are extracellular. The chain crosses the membrane as a helical span at residues 347–366 (RAIIYLILTIIFSLLFGFLW). Residues 367–409 (VELTGLDARTIARQLQRAGLQIPGFRRDPRTLERVLQKYIPYV) lie on the Cytoplasmic side of the membrane. Residues 410–428 (TFWGSLTVALISVLADFLG) traverse the membrane as a helical segment. The Extracellular portion of the chain corresponds to 429–431 (ALG). Residues 432–446 (TGTGILLTVGILYRF) traverse the membrane as a helical segment. Residues 447 to 468 (YEEIAREQITEMFPALRRLFKG) lie on the Cytoplasmic side of the membrane.

This sequence belongs to the SecY/SEC61-alpha family. In terms of assembly, component of the Sec protein translocase complex. Heterotrimer consisting of alpha (SecY), beta (SecG) and gamma (SecE) subunits. The heterotrimers can form oligomers, although 1 heterotrimer is thought to be able to translocate proteins. Interacts with the ribosome. May interact with SecDF, and other proteins may be involved.

It is found in the cell membrane. In terms of biological role, the central subunit of the protein translocation channel SecYEG. Consists of two halves formed by TMs 1-5 and 6-10. These two domains form a lateral gate at the front which open onto the bilayer between TMs 2 and 7, and are clamped together by SecE at the back. The channel is closed by both a pore ring composed of hydrophobic SecY resides and a short helix (helix 2A) on the extracellular side of the membrane which forms a plug. The plug probably moves laterally to allow the channel to open. The ring and the pore may move independently. This chain is Protein translocase subunit SecY, found in Pyrococcus horikoshii (strain ATCC 700860 / DSM 12428 / JCM 9974 / NBRC 100139 / OT-3).